The chain runs to 521 residues: Solute carrier family 35 member F4 (521 aa).

The next 10 helical transmembrane spans lie at 160 to 180 (MVLKGIWGLLIILSVSSSWVG), 192 to 212 (FYCPFFMTWFSTNWNIMFFPV), 248 to 266 (FLKRTAPFSILWTLTNYLY), 277 to 297 (DVSALFCCNKAFVFLLSWIVL), 301 to 321 (FMGVRIVAAIMAITGIVMMAY), 330 to 350 (IIGVAFAVGSASTSALYKVLF), 365 to 385 (FVSTLGFFNLIFISFTPVILY), 395 to 417 (FAALPWGCLCGMAGLWLAFNILV), 419 to 441 (VGVVLTYPILISIGTVLSVPGNA), and 450 to 470 (VIFNVVRLAATIIICIGFLLM). An EamA domain is found at 261–321 (LTNYLYLLAL…AITGIVMMAY (61 aa)).

This sequence belongs to the SLC35F solute transporter family.

The protein localises to the membrane. Its function is as follows. Putative solute transporter. This Homo sapiens (Human) protein is Solute carrier family 35 member F4 (SLC35F4).